The primary structure comprises 357 residues: MCRLDSERALSLFSYLSGTLAATPFLWCFIFKALYSFTLFTTEITAVFFWSLPVTHLALICMCLCPAAQKQLDRRLEWICASAVFAAVVCAAFSGFTFSRVPFIPGLCVLNCLLLLPYPLATATAVYQAPPIVHRYYELGFCGAFMVYYLLLFKKVFVSGVFWLPFIVFLVGGLLAFRHLEQHVYIRAGMQRRRAIFIMPGKYITYSVFQAWAYCRREVVVFVTLLLATLISTASIGLLTPVLIGLDKYMTLFYVGLLSCVGVSVASRRALFVLLPLAAVLLTLVHILGSGPDMLLVRSCLCCLFLVSMLAAMGVEIQLIRRKLHRALNAPQMVLALCTVGNLCISCLLSVINKVVG.

A run of 11 helical transmembrane segments spans residues 20–40 (LAATPFLWCFIFKALYSFTLF), 44–64 (ITAVFFWSLPVTHLALICMCL), 78–98 (WICASAVFAAVVCAAFSGFTF), 101–121 (VPFIPGLCVLNCLLLLPYPLA), 132–152 (IVHRYYELGFCGAFMVYYLLL), 157–177 (FVSGVFWLPFIVFLVGGLLAF), 219–239 (VVVFVTLLLATLISTASIGLL), 242–262 (VLIGLDKYMTLFYVGLLSCVG), 270–290 (ALFVLLPLAAVLLTLVHILGS), 300–320 (CLCCLFLVSMLAAMGVEIQLI), and 333–353 (MVLALCTVGNLCISCLLSVIN).

It belongs to the herpesviridae BMRF2 family.

The protein resides in the virion membrane. The protein localises to the host cell membrane. Functionally, participates in rearrangement of cellular actin to increase intercellular contacts and thereby promotes virus cell-to-cell spreadin$g. The polypeptide is Protein ORF58 (ORF58) (Homo sapiens (Human)).